A 116-amino-acid polypeptide reads, in one-letter code: Large ribosomal subunit protein eL30 (116 aa).

Belongs to the eukaryotic ribosomal protein eL30 family. As to quaternary structure, component of the large ribosomal subunit.

It is found in the cytoplasm. Functionally, component of the large ribosomal subunit. The ribosome is a large ribonucleoprotein complex responsible for the synthesis of proteins in the cell. This is Large ribosomal subunit protein eL30 (rpl30) from Ictalurus punctatus (Channel catfish).